Consider the following 269-residue polypeptide: Putative carbamate hydrolase RutD (269 aa).

Positions 26 to 144 (VVLLSSGLGG…CFDTRLHLLN (119 aa)) constitute an AB hydrolase-1 domain.

The protein belongs to the AB hydrolase superfamily. Hydrolase RutD family.

The catalysed reaction is carbamate + 2 H(+) = NH4(+) + CO2. Functionally, involved in pyrimidine catabolism. May facilitate the hydrolysis of carbamate, a reaction that can also occur spontaneously. The protein is Putative carbamate hydrolase RutD of Caulobacter vibrioides (strain ATCC 19089 / CIP 103742 / CB 15) (Caulobacter crescentus).